A 338-amino-acid polypeptide reads, in one-letter code: Lipoate-protein ligase A (338 aa).

In terms of domain architecture, BPL/LPL catalytic spans 29–216; that stretch reads PATQRVLFLW…AFFAHYGERV (188 aa). ATP-binding positions include R71, 76 to 79, and K134; that span reads GAVF. K134 provides a ligand contact to (R)-lipoate.

It belongs to the LplA family. In terms of assembly, monomer.

The protein localises to the cytoplasm. The catalysed reaction is L-lysyl-[lipoyl-carrier protein] + (R)-lipoate + ATP = N(6)-[(R)-lipoyl]-L-lysyl-[lipoyl-carrier protein] + AMP + diphosphate + H(+). The protein operates within protein modification; protein lipoylation via exogenous pathway; protein N(6)-(lipoyl)lysine from lipoate: step 1/2. It functions in the pathway protein modification; protein lipoylation via exogenous pathway; protein N(6)-(lipoyl)lysine from lipoate: step 2/2. In terms of biological role, catalyzes both the ATP-dependent activation of exogenously supplied lipoate to lipoyl-AMP and the transfer of the activated lipoyl onto the lipoyl domains of lipoate-dependent enzymes. The protein is Lipoate-protein ligase A of Escherichia coli (strain K12 / MC4100 / BW2952).